Reading from the N-terminus, the 257-residue chain is Nickel import system ATP-binding protein NikD (257 aa).

One can recognise an ABC transporter domain in the interval 4–245 (IDIQNLTIKN…HLHPYTERLI (242 aa)). Residue 37–44 (GESGAGKS) coordinates ATP.

This sequence belongs to the ABC transporter superfamily. The complex is composed of two ATP-binding proteins (NikD and NikE), two transmembrane proteins (NikB and NikC) and a solute-binding protein (NikA).

Its subcellular location is the cell membrane. It carries out the reaction Ni(2+)(out) + ATP + H2O = Ni(2+)(in) + ADP + phosphate + H(+). Part of the ABC transporter complex NikABCDE (Opp2) involved in nickel import. Probably responsible for energy coupling to the transport system. This chain is Nickel import system ATP-binding protein NikD, found in Staphylococcus aureus (strain Mu50 / ATCC 700699).